The sequence spans 821 residues: Ribonuclease R (821 aa).

One can recognise an RNB domain in the interval 267 to 593 (RVDLRALPLV…LLHRAIKYLI (327 aa)). Residues 652–733 (GEELEGVVAN…DDRQIDFELV (82 aa)) form the S1 motif domain. Residues 739 to 821 (LRGQGKTAKK…KSGKVRDKTK (83 aa)) form a disordered region. Composition is skewed to basic and acidic residues over residues 748–764 (KRAD…KEAA) and 774–794 (TKSE…EGRS). Over residues 795-814 (KPKKTKAPKKRKDQARKKSG) the composition is skewed to basic residues.

The protein belongs to the RNR ribonuclease family. RNase R subfamily.

It is found in the cytoplasm. It catalyses the reaction Exonucleolytic cleavage in the 3'- to 5'-direction to yield nucleoside 5'-phosphates.. Its function is as follows. 3'-5' exoribonuclease that releases 5'-nucleoside monophosphates and is involved in maturation of structured RNAs. The protein is Ribonuclease R of Vibrio cholerae serotype O1 (strain ATCC 39315 / El Tor Inaba N16961).